Consider the following 211-residue polypeptide: GTP pyrophosphokinase YjbM (211 aa).

Guanosine 3'-diphosphate 5'-triphosphate is bound by residues 21 to 28 (KVKLKGIR), 41 to 42 (EF), and 46 to 48 (RVK). ATP-binding positions include 46-48 (RVK), Ser52, 56-59 (KARR), Asp72, and Arg77. Arg59 is a guanosine 3'-diphosphate 5'-triphosphate binding site. Residue Asp72 participates in Mg(2+) binding. Guanosine 3'-diphosphate 5'-triphosphate contacts are provided by residues Arg105, 112 to 114 (KES), and His120. The Proton acceptor role is filled by Glu139. Guanosine 3'-diphosphate 5'-triphosphate-binding positions include Asn148 and 151 to 155 (ATIEH).

Belongs to the RelA/SpoT family. In terms of assembly, homotetramer.

It carries out the reaction GTP + ATP = guanosine 3'-diphosphate 5'-triphosphate + AMP. It catalyses the reaction GDP + ATP = guanosine 3',5'-bis(diphosphate) + AMP. Its pathway is purine metabolism; ppGpp biosynthesis; ppGpp from GTP: step 1/2. With respect to regulation, allosterically regulated by its own products; pppGpp simulates synthesis 10-fold more than ppGpp. 2 pppGpp molecules bind in a regulatory cleft in the middle of the tetramer in an asymmetric manner. There is a specific contact of Lys-25 to the gamma-phosphate of pppGpp, explaining why pppGpp stimulates activity but ppGpp does not. In terms of biological role, functions as a (p)ppGpp synthase; GDP can be used instead of GTP, resulting in an increase of (p)ppGpp synthesis. The enzyme binds ATP, then GDP or GTP and catalysis is highly cooperative. In eubacteria ppGpp (guanosine 3'-diphosphate 5'-diphosphate) is a mediator of the stringent response that coordinates a variety of cellular activities in response to changes in nutritional abundance. Probably has a minor role in the stringent response. The polypeptide is GTP pyrophosphokinase YjbM (yjbM) (Bacillus subtilis (strain 168)).